Here is a 487-residue protein sequence, read N- to C-terminus: MTELFIDGAWVAGSGPVFASRNPGTDAVAWQGDSASAADVDRAVASARRAFAGWSALDFEARCEIVKRFAALLTERKEAIATAIGRETGKPLWEARTEVASMAAKVGISIQAYQERTGEKRQDMADGVAVLRHRPHGVVAVFGPYNFPGHLPNGHIVPALIAGNTVVFKPSELAPGVARATVEVWQAAGLPPGVLNLVQGEKDTGIALANHRQIDGLFFTGSSDTGTLLHKQFGGRPEIVLALEMGGNNPLVIGEVEDVDAAVHHTIQSAFLSAGQRCTCARRIFVPQGAFGDRFLARFADVTSKITADVFDADPQPFMGAVISARAAAKLVDAQSRLVEQGAKPIIAMTQRDPRLGFVNAAIADVTGVANLPDEEHFGPLAQVVRYTTLDDAIERANDTAFGLSAGLLADDPKVWEHFRRTIRAGIVNWNRPTNGASSAAPFGGTGRSGNHRPSAYYAADYCAYPMASVESTQLTLPASLSPGLHF.

221 to 226 (GSSDTG) contributes to the NAD(+) binding site. Residues E244 and C278 contribute to the active site.

This sequence belongs to the aldehyde dehydrogenase family. AstD subfamily.

It carries out the reaction N-succinyl-L-glutamate 5-semialdehyde + NAD(+) + H2O = N-succinyl-L-glutamate + NADH + 2 H(+). Its pathway is amino-acid degradation; L-arginine degradation via AST pathway; L-glutamate and succinate from L-arginine: step 4/5. Its function is as follows. Catalyzes the NAD-dependent reduction of succinylglutamate semialdehyde into succinylglutamate. In Burkholderia cenocepacia (strain ATCC BAA-245 / DSM 16553 / LMG 16656 / NCTC 13227 / J2315 / CF5610) (Burkholderia cepacia (strain J2315)), this protein is N-succinylglutamate 5-semialdehyde dehydrogenase.